Reading from the N-terminus, the 169-residue chain is Disulfide bond formation protein B 1 (169 aa).

The Cytoplasmic portion of the chain corresponds to 1-14; it reads MSDNTLYLRREKRF. The chain crosses the membrane as a helical span at residues 15 to 31; the sequence is LVLLGIICLALIGGALY. At 32-49 the chain is on the periplasmic side; the sequence is MQIVLGEAPCPLCILQRY. Cys-41 and Cys-44 form a disulfide bridge. The chain crosses the membrane as a helical span at residues 50–64; the sequence is ALLFIAIFAFIGAAM. The Cytoplasmic portion of the chain corresponds to 65-71; that stretch reads SGRRGVT. A helical transmembrane segment spans residues 72-89; sequence VCETLVTLSALGGIAAAG. Residues 90–144 are Periplasmic-facing; sequence RHVWILAHPSDSCGIDVLQPIVDGLPLATLFPTGFQVSGFCTTPYPPVLGLSLAQ. A disulfide bridge connects residues Cys-102 and Cys-130. A helical membrane pass occupies residues 145–163; sequence WALAAFVLTAVLVPACIIR. The Cytoplasmic portion of the chain corresponds to 164–169; that stretch reads NRRKPY.

Belongs to the DsbB family.

The protein resides in the cell inner membrane. Required for disulfide bond formation in some periplasmic proteins. Acts by oxidizing the DsbA protein. The sequence is that of Disulfide bond formation protein B 1 from Pseudomonas savastanoi pv. phaseolicola (strain 1448A / Race 6) (Pseudomonas syringae pv. phaseolicola (strain 1448A / Race 6)).